The following is a 441-amino-acid chain: Tubulin beta chain, nucleomorph (441 aa).

Positions 11, 69, 138, 142, 143, 144, 204, and 226 each coordinate GTP. E69 is a binding site for Mg(2+).

Belongs to the tubulin family. Dimer of alpha and beta chains. A typical microtubule is a hollow water-filled tube with an outer diameter of 25 nm and an inner diameter of 15 nM. Alpha-beta heterodimers associate head-to-tail to form protofilaments running lengthwise along the microtubule wall with the beta-tubulin subunit facing the microtubule plus end conferring a structural polarity. Microtubules usually have 13 protofilaments but different protofilament numbers can be found in some organisms and specialized cells. Mg(2+) is required as a cofactor.

Its function is as follows. Tubulin is the major constituent of microtubules, a cylinder consisting of laterally associated linear protofilaments composed of alpha- and beta-tubulin heterodimers. Microtubules grow by the addition of GTP-tubulin dimers to the microtubule end, where a stabilizing cap forms. Below the cap, tubulin dimers are in GDP-bound state, owing to GTPase activity of alpha-tubulin. The protein is Tubulin beta chain, nucleomorph (tubB) of Guillardia theta (Cryptophyte).